The sequence spans 444 residues: Pineal opsin (444 aa).

The interval 1-20 (MDALQESPPSHHSLPSALPS) is disordered. Residues 1-46 (MDALQESPPSHHSLPSALPSATGGNGTVATMHNPFERPLEGIAPWN) are Extracellular-facing. Low complexity predominate over residues 7–20 (SPPSHHSLPSALPS). Residue Asn-25 is glycosylated (N-linked (GlcNAc...) asparagine). The helical transmembrane segment at 47–71 (FTMLAALMGTITALSLGENFAVIVV) threads the bilayer. The Cytoplasmic portion of the chain corresponds to 72 to 83 (TARFRQLRQPLN). Residues 84–108 (YVLVNLAAADLLVSAIGGSVSFFTN) traverse the membrane as a helical segment. Over 109-123 (IKGYFFLGVHACVLE) the chain is Extracellular. A disulfide bridge connects residues Cys-120 and Cys-197. A helical transmembrane segment spans residues 124–143 (GFAVTYFGVVALWSLALLAF). Over 144–162 (ERYFVICRPLGNFRLQSKH) the chain is Cytoplasmic. A helical membrane pass occupies residues 163–186 (AVLGLAVVWVFSLACTLPPVLGWS). At 187–210 (SYRPSMIGTTCEPNWYSGELHDHT) the chain is on the extracellular side. The chain crosses the membrane as a helical span at residues 211-238 (FILMFFSTCFIFPLAVIFFSYGKLIQKL). Residues 239 to 260 (KKASETQRGLESTRRAEQQVTR) are Cytoplasmic-facing. Residues 261 to 284 (MVVVMILAFLVCWMPYATFSIVVT) traverse the membrane as a helical segment. Residues 285-292 (ACPTIHLD) lie on the Extracellular side of the membrane. A helical membrane pass occupies residues 293–317 (PLLAAVPAFFSKTATVYNPVIYIFM). Lys-304 is subject to N6-(retinylidene)lysine. The Cytoplasmic segment spans residues 318–444 (NKQFRDCFVQ…SESVSKICPV (127 aa)). Cys-331 is lipidated: S-palmitoyl cysteine. Disordered stretches follow at residues 341–360 (QTAGAQDTEHTASVNTQSPG) and 388–420 (EPTMSAAGSMGAPPNKSTAPCQQQGQQQQQQGT). The span at 409–419 (QQQGQQQQQQG) shows a compositional bias: low complexity.

It belongs to the G-protein coupled receptor 1 family. Opsin subfamily. Post-translationally, phosphorylated on some or all of the serine and threonine residues present in the C-terminal region. As to expression, pineal gland.

The protein localises to the membrane. The sequence is that of Pineal opsin from Petromyzon marinus (Sea lamprey).